A 338-amino-acid polypeptide reads, in one-letter code: 1-aminocyclopropane-1-carboxylate deaminase (338 aa).

Lysine 51 carries the N6-(pyridoxal phosphate)lysine modification. Catalysis depends on serine 78, which acts as the Nucleophile.

The protein belongs to the ACC deaminase/D-cysteine desulfhydrase family. Homotrimer. The cofactor is pyridoxal 5'-phosphate.

It catalyses the reaction 1-aminocyclopropane-1-carboxylate + H2O = 2-oxobutanoate + NH4(+). Catalyzes a cyclopropane ring-opening reaction, the irreversible conversion of 1-aminocyclopropane-1-carboxylate (ACC) to ammonia and alpha-ketobutyrate. Allows growth on ACC as a nitrogen source. The polypeptide is 1-aminocyclopropane-1-carboxylate deaminase (Variovorax paradoxus (strain S110)).